The primary structure comprises 330 residues: Aspartate--ammonia ligase (330 aa).

This sequence belongs to the class-II aminoacyl-tRNA synthetase family. AsnA subfamily.

The protein localises to the cytoplasm. It carries out the reaction L-aspartate + NH4(+) + ATP = L-asparagine + AMP + diphosphate + H(+). It functions in the pathway amino-acid biosynthesis; L-asparagine biosynthesis; L-asparagine from L-aspartate (ammonia route): step 1/1. The sequence is that of Aspartate--ammonia ligase from Escherichia coli O7:K1 (strain IAI39 / ExPEC).